A 254-amino-acid chain; its full sequence is Gamma-glutamyl-gamma-aminobutyrate hydrolase (254 aa).

Positions 16–250 (RNRLKGHATQ…ITAWQHHIAE (235 aa)) constitute a Glutamine amidotransferase type-1 domain. Cys-114 serves as the catalytic Nucleophile. Active-site residues include His-222 and Glu-224.

Belongs to the peptidase C26 family.

It catalyses the reaction 4-(gamma-L-glutamylamino)butanoate + H2O = 4-aminobutanoate + L-glutamate. The protein operates within amine and polyamine degradation; putrescine degradation; 4-aminobutanoate from putrescine: step 4/4. In terms of biological role, involved in the breakdown of putrescine via hydrolysis of the gamma-glutamyl linkage of gamma-glutamyl-gamma-aminobutyrate. The polypeptide is Gamma-glutamyl-gamma-aminobutyrate hydrolase (puuD) (Shigella flexneri).